The chain runs to 362 residues: Probable protein phosphatase 2C 24 (362 aa).

The 284-residue stretch at 77–360 (RYGVSSVCGR…DNVSVVVIDL (284 aa)) folds into the PPM-type phosphatase domain. 4 residues coordinate Mn(2+): Asp-117, Gly-118, Asp-295, and Asp-351.

It belongs to the PP2C family. It depends on Mg(2+) as a cofactor. Mn(2+) serves as cofactor.

The enzyme catalyses O-phospho-L-seryl-[protein] + H2O = L-seryl-[protein] + phosphate. It carries out the reaction O-phospho-L-threonyl-[protein] + H2O = L-threonyl-[protein] + phosphate. The chain is Probable protein phosphatase 2C 24 from Arabidopsis thaliana (Mouse-ear cress).